We begin with the raw amino-acid sequence, 87 residues long: Large ribosomal subunit protein eL31 (87 aa).

The protein belongs to the eukaryotic ribosomal protein eL31 family.

This is Large ribosomal subunit protein eL31 (rpl31e) from Methanocaldococcus jannaschii (strain ATCC 43067 / DSM 2661 / JAL-1 / JCM 10045 / NBRC 100440) (Methanococcus jannaschii).